We begin with the raw amino-acid sequence, 105 residues long: Hydrogen cyanide synthase subunit HcnA (105 aa).

The region spanning A16–R97 is the 2Fe-2S ferredoxin-type domain. [2Fe-2S] cluster-binding residues include C60, C65, C68, and C81.

Heterotrimer of HcnA, HcnB and HcnC.

It localises to the cell membrane. It catalyses the reaction glycine + 2 A = hydrogen cyanide + 2 AH2 + CO2. Its function is as follows. A three-component membrane-bound flavoenzyme that catalyzes the formation of hydrogen cyanide, a secondary metabolite, by transfer of electrons to a cyanide-resistant branch of the aerobic respiratory chain. Contributes to suppression of black root rot of tobacco. This Pseudomonas protegens (strain DSM 19095 / LMG 27888 / CFBP 6595 / CHA0) protein is Hydrogen cyanide synthase subunit HcnA.